We begin with the raw amino-acid sequence, 160 residues long: Transcription elongation factor GreA (160 aa).

Residues 14–38 (IKAELASLKKERPEVIKAIAEAREE) are a coiled coil.

It belongs to the GreA/GreB family.

Necessary for efficient RNA polymerase transcription elongation past template-encoded arresting sites. The arresting sites in DNA have the property of trapping a certain fraction of elongating RNA polymerases that pass through, resulting in locked ternary complexes. Cleavage of the nascent transcript by cleavage factors such as GreA or GreB allows the resumption of elongation from the new 3'terminus. GreA releases sequences of 2 to 3 nucleotides. The protein is Transcription elongation factor GreA of Maridesulfovibrio salexigens (strain ATCC 14822 / DSM 2638 / NCIMB 8403 / VKM B-1763) (Desulfovibrio salexigens).